The sequence spans 316 residues: BTB/POZ domain-containing protein Y57A10B.3 (316 aa).

The first 21 residues, 1 to 21 (MSAMRRCTCFIICLLTSYTYG), serve as a signal peptide directing secretion. 6 N-linked (GlcNAc...) asparagine glycosylation sites follow: Asn-91, Asn-107, Asn-118, Asn-133, Asn-191, and Asn-260. Positions 158 to 226 (RDAVLIVEGK…VHSTATFPND (69 aa)) constitute a BTB domain.

It is found in the secreted. In Caenorhabditis elegans, this protein is BTB/POZ domain-containing protein Y57A10B.3 (btb-14).